The following is a 498-amino-acid chain: ATP synthase subunit alpha, chloroplastic (498 aa).

170 to 177 contributes to the ATP binding site; the sequence is GDRQTGKT.

The protein belongs to the ATPase alpha/beta chains family. In terms of assembly, F-type ATPases have 2 components, CF(1) - the catalytic core - and CF(0) - the membrane proton channel. CF(1) has five subunits: alpha(3), beta(3), gamma(1), delta(1), epsilon(1). CF(0) has four main subunits: a, b, b' and c.

It localises to the plastid. The protein localises to the chloroplast thylakoid membrane. It carries out the reaction ATP + H2O + 4 H(+)(in) = ADP + phosphate + 5 H(+)(out). In terms of biological role, produces ATP from ADP in the presence of a proton gradient across the membrane. The alpha chain is a regulatory subunit. This Oltmannsiellopsis viridis (Marine flagellate) protein is ATP synthase subunit alpha, chloroplastic.